The primary structure comprises 179 residues: Large ribosomal subunit protein uL5 (179 aa).

This sequence belongs to the universal ribosomal protein uL5 family. Part of the 50S ribosomal subunit; part of the 5S rRNA/L5/L18/L25 subcomplex. Contacts the 5S rRNA and the P site tRNA. Forms a bridge to the 30S subunit in the 70S ribosome.

Its function is as follows. This is one of the proteins that bind and probably mediate the attachment of the 5S RNA into the large ribosomal subunit, where it forms part of the central protuberance. In the 70S ribosome it contacts protein S13 of the 30S subunit (bridge B1b), connecting the 2 subunits; this bridge is implicated in subunit movement. Contacts the P site tRNA; the 5S rRNA and some of its associated proteins might help stabilize positioning of ribosome-bound tRNAs. In Geotalea daltonii (strain DSM 22248 / JCM 15807 / FRC-32) (Geobacter daltonii), this protein is Large ribosomal subunit protein uL5.